The chain runs to 367 residues: Ferrochelatase (367 aa).

Fe cation-binding residues include His213 and Glu294.

It belongs to the ferrochelatase family.

It localises to the cytoplasm. The catalysed reaction is heme b + 2 H(+) = protoporphyrin IX + Fe(2+). The protein operates within porphyrin-containing compound metabolism; protoheme biosynthesis; protoheme from protoporphyrin-IX: step 1/1. Catalyzes the ferrous insertion into protoporphyrin IX. The chain is Ferrochelatase from Polaromonas sp. (strain JS666 / ATCC BAA-500).